An 82-amino-acid chain; its full sequence is Myosin light chain alkali (82 aa).

One can recognise an EF-hand domain in the interval 7–42 (GCYEDFIECLKLYDKEENGTMLLAELQHALLALGEN).

In terms of assembly, myosin is a hexamer of 2 heavy chains and 4 light chains.

The protein is Myosin light chain alkali (Mlc1) of Drosophila teissieri (Fruit fly).